Consider the following 72-residue polypeptide: Translation initiation factor IF-1 (72 aa).

An S1-like domain is found at 1 to 72 (MAKEESIEIE…SKGRITYRYK (72 aa)).

The protein belongs to the IF-1 family. Component of the 30S ribosomal translation pre-initiation complex which assembles on the 30S ribosome in the order IF-2 and IF-3, IF-1 and N-formylmethionyl-tRNA(fMet); mRNA recruitment can occur at any time during PIC assembly.

It localises to the cytoplasm. One of the essential components for the initiation of protein synthesis. Stabilizes the binding of IF-2 and IF-3 on the 30S subunit to which N-formylmethionyl-tRNA(fMet) subsequently binds. Helps modulate mRNA selection, yielding the 30S pre-initiation complex (PIC). Upon addition of the 50S ribosomal subunit IF-1, IF-2 and IF-3 are released leaving the mature 70S translation initiation complex. In Chlorobium phaeovibrioides (strain DSM 265 / 1930) (Prosthecochloris vibrioformis (strain DSM 265)), this protein is Translation initiation factor IF-1.